Consider the following 478-residue polypeptide: Sorting nexin-4 (478 aa).

A compositionally biased stretch (basic and acidic residues) spans 1 to 10 (MAVIDQHQDD). The disordered stretch occupies residues 1–56 (MAVIDQHQDDFSNVSWNTDEHTAAESSSSVTATEFDDTERNGHNAYESDAPGSDGQ). Low complexity predominate over residues 24 to 33 (AESSSSVTAT). Residues 58–180 (VLDCVVSEPL…IFLESPDWNA (123 aa)) enclose the PX domain. A 1,2-diacyl-sn-glycero-3-phospho-(1D-myo-inositol-3-phosphate) is bound by residues arginine 101, threonine 103, lysine 127, and arginine 146. The segment at 459–478 (EGVSGTRSTGVEPPGRRLAD) is disordered.

Belongs to the sorting nexin family. In terms of assembly, interacts with the mitochondrial prohibitin complex subunits PHB1 and PHB2; the interaction is direct and plays a role in mitophagy.

The protein resides in the cytoplasm. Its subcellular location is the cytosol. It is found in the preautophagosomal structure membrane. It localises to the endosome membrane. The protein localises to the mitochondrion membrane. The protein resides in the lipid droplet. Its function is as follows. Sorting nexin, involved in the separation or division of vacuoles throughout the entire life cycle of the cells. Involved in retrieval of late-Golgi SNAREs from post-Golgi endosomes to the trans-Golgi network, for cytoplasm to vacuole transport (Cvt), and autophagy of large cargos including mitophagy, pexophagy and glycophagy. Required for the switch to necrotrophic growth. The polypeptide is Sorting nexin-4 (Colletotrichum higginsianum (strain IMI 349063) (Crucifer anthracnose fungus)).